The primary structure comprises 140 residues: uncharacterized protein (140 aa).

Belongs to the MG067/MG068/MG395 family.

This is an uncharacterized protein from Mycoplasma pneumoniae (strain ATCC 29342 / M129 / Subtype 1) (Mycoplasmoides pneumoniae).